A 212-amino-acid polypeptide reads, in one-letter code: Imidazole glycerol phosphate synthase subunit HisH (212 aa).

A Glutamine amidotransferase type-1 domain is found at 1–212; that stretch reads MLAILDYKAG…YEYCKEVSDA (212 aa). The Nucleophile role is filled by cysteine 79. Residues histidine 187 and glutamate 189 contribute to the active site.

Heterodimer of HisH and HisF.

It localises to the cytoplasm. The enzyme catalyses 5-[(5-phospho-1-deoxy-D-ribulos-1-ylimino)methylamino]-1-(5-phospho-beta-D-ribosyl)imidazole-4-carboxamide + L-glutamine = D-erythro-1-(imidazol-4-yl)glycerol 3-phosphate + 5-amino-1-(5-phospho-beta-D-ribosyl)imidazole-4-carboxamide + L-glutamate + H(+). It carries out the reaction L-glutamine + H2O = L-glutamate + NH4(+). The protein operates within amino-acid biosynthesis; L-histidine biosynthesis; L-histidine from 5-phospho-alpha-D-ribose 1-diphosphate: step 5/9. IGPS catalyzes the conversion of PRFAR and glutamine to IGP, AICAR and glutamate. The HisH subunit catalyzes the hydrolysis of glutamine to glutamate and ammonia as part of the synthesis of IGP and AICAR. The resulting ammonia molecule is channeled to the active site of HisF. This chain is Imidazole glycerol phosphate synthase subunit HisH, found in Maridesulfovibrio salexigens (strain ATCC 14822 / DSM 2638 / NCIMB 8403 / VKM B-1763) (Desulfovibrio salexigens).